A 276-amino-acid polypeptide reads, in one-letter code: uncharacterized protein (276 aa).

The signal sequence occupies residues 1 to 16; it reads MELGLILMFASAFVSA. A glycan (N-linked (GlcNAc...) asparagine) is linked at Asn-265.

This is an uncharacterized protein from Encephalitozoon cuniculi (strain GB-M1) (Microsporidian parasite).